Here is a 200-residue protein sequence, read N- to C-terminus: Phycocyanobilin lyase subunit beta (200 aa).

Belongs to the CpcE/RpcE/PecE family. In terms of assembly, cpcE and CpcF associate to form a lyase.

Required for the chromophorylation of the CpcA gene product. In Nostoc sp. (strain PCC 7120 / SAG 25.82 / UTEX 2576), this protein is Phycocyanobilin lyase subunit beta (cpcF).